We begin with the raw amino-acid sequence, 294 residues long: Lipoyl synthase (294 aa).

The [4Fe-4S] cluster site is built by cysteine 35, cysteine 40, cysteine 46, cysteine 61, cysteine 65, cysteine 68, and serine 275. Residues 46-264 (CWGGGTATVM…REAGLGLGFR (219 aa)) enclose the Radical SAM core domain.

The protein belongs to the radical SAM superfamily. Lipoyl synthase family. It depends on [4Fe-4S] cluster as a cofactor.

The protein resides in the cytoplasm. It carries out the reaction [[Fe-S] cluster scaffold protein carrying a second [4Fe-4S](2+) cluster] + N(6)-octanoyl-L-lysyl-[protein] + 2 oxidized [2Fe-2S]-[ferredoxin] + 2 S-adenosyl-L-methionine + 4 H(+) = [[Fe-S] cluster scaffold protein] + N(6)-[(R)-dihydrolipoyl]-L-lysyl-[protein] + 4 Fe(3+) + 2 hydrogen sulfide + 2 5'-deoxyadenosine + 2 L-methionine + 2 reduced [2Fe-2S]-[ferredoxin]. It functions in the pathway protein modification; protein lipoylation via endogenous pathway; protein N(6)-(lipoyl)lysine from octanoyl-[acyl-carrier-protein]: step 2/2. In terms of biological role, catalyzes the radical-mediated insertion of two sulfur atoms into the C-6 and C-8 positions of the octanoyl moiety bound to the lipoyl domains of lipoate-dependent enzymes, thereby converting the octanoylated domains into lipoylated derivatives. The polypeptide is Lipoyl synthase (Anaeromyxobacter sp. (strain Fw109-5)).